A 367-amino-acid chain; its full sequence is Queuine tRNA-ribosyltransferase (367 aa).

The Proton acceptor role is filled by D89. Substrate is bound by residues D89 to F93, D143, Q185, and G212. The segment at G243–D249 is RNA binding. D262 (nucleophile) is an active-site residue. An RNA binding; important for wobble base 34 recognition region spans residues T267–R271. Zn(2+)-binding residues include C300, C302, C305, and H331.

The protein belongs to the queuine tRNA-ribosyltransferase family. Homodimer. Within each dimer, one monomer is responsible for RNA recognition and catalysis, while the other monomer binds to the replacement base PreQ1. Zn(2+) is required as a cofactor.

It carries out the reaction 7-aminomethyl-7-carbaguanine + guanosine(34) in tRNA = 7-aminomethyl-7-carbaguanosine(34) in tRNA + guanine. It functions in the pathway tRNA modification; tRNA-queuosine biosynthesis. Functionally, catalyzes the base-exchange of a guanine (G) residue with the queuine precursor 7-aminomethyl-7-deazaguanine (PreQ1) at position 34 (anticodon wobble position) in tRNAs with GU(N) anticodons (tRNA-Asp, -Asn, -His and -Tyr). Catalysis occurs through a double-displacement mechanism. The nucleophile active site attacks the C1' of nucleotide 34 to detach the guanine base from the RNA, forming a covalent enzyme-RNA intermediate. The proton acceptor active site deprotonates the incoming PreQ1, allowing a nucleophilic attack on the C1' of the ribose to form the product. After dissociation, two additional enzymatic reactions on the tRNA convert PreQ1 to queuine (Q), resulting in the hypermodified nucleoside queuosine (7-(((4,5-cis-dihydroxy-2-cyclopenten-1-yl)amino)methyl)-7-deazaguanosine). The chain is Queuine tRNA-ribosyltransferase from Thiobacillus denitrificans (strain ATCC 25259 / T1).